A 267-amino-acid polypeptide reads, in one-letter code: B3 domain-containing protein At3g11580 (267 aa).

The segment at residues 29-143 is a DNA-binding region (TF-B3); sequence FEKSLTPSDV…RLFIGWRRRG (115 aa).

Its subcellular location is the nucleus. The sequence is that of B3 domain-containing protein At3g11580 (ARF32) from Arabidopsis thaliana (Mouse-ear cress).